The primary structure comprises 132 residues: Large ribosomal subunit protein bL17 (132 aa).

This sequence belongs to the bacterial ribosomal protein bL17 family. As to quaternary structure, part of the 50S ribosomal subunit. Contacts protein L32.

This Cellvibrio japonicus (strain Ueda107) (Pseudomonas fluorescens subsp. cellulosa) protein is Large ribosomal subunit protein bL17.